Consider the following 295-residue polypeptide: MIKYYNRRNKDYDIEKVAGEKYLNWTYSSPIGMNLLEVFIKKKFFSKIYGFYCNKRLSRKKINKFINDFGIDMSLSENQSSNFKCFNDFFTRKLKKEARPVKADKNLLISPGDGKILAYKNLNLNSVTEVKGINYSFYELINNDSLAKEYDNGTCLVLRLCPTDYHRFHFIDNGICENTIKLKGFYYSVNPIALSKIPSVFCKNKREYSIFHSENFGDIIFMEVGATCVGSIIQTYKPNTKILKGDEKGYFKFGGSTVILFFKKNTIKIDNDILSQSKLGYETSVIMGEPIGSRK.

Catalysis depends on charge relay system; for autoendoproteolytic cleavage activity residues aspartate 113, histidine 169, and serine 256. The active-site Schiff-base intermediate with substrate; via pyruvic acid; for decarboxylase activity is serine 256. Position 256 is a pyruvic acid (Ser); by autocatalysis (serine 256).

It belongs to the phosphatidylserine decarboxylase family. PSD-B subfamily. Prokaryotic type II sub-subfamily. In terms of assembly, heterodimer of a large membrane-associated beta subunit and a small pyruvoyl-containing alpha subunit. Pyruvate is required as a cofactor. In terms of processing, is synthesized initially as an inactive proenzyme. Formation of the active enzyme involves a self-maturation process in which the active site pyruvoyl group is generated from an internal serine residue via an autocatalytic post-translational modification. Two non-identical subunits are generated from the proenzyme in this reaction, and the pyruvate is formed at the N-terminus of the alpha chain, which is derived from the carboxyl end of the proenzyme. The autoendoproteolytic cleavage occurs by a canonical serine protease mechanism, in which the side chain hydroxyl group of the serine supplies its oxygen atom to form the C-terminus of the beta chain, while the remainder of the serine residue undergoes an oxidative deamination to produce ammonia and the pyruvoyl prosthetic group on the alpha chain. During this reaction, the Ser that is part of the protease active site of the proenzyme becomes the pyruvoyl prosthetic group, which constitutes an essential element of the active site of the mature decarboxylase.

The protein resides in the cell membrane. The enzyme catalyses a 1,2-diacyl-sn-glycero-3-phospho-L-serine + H(+) = a 1,2-diacyl-sn-glycero-3-phosphoethanolamine + CO2. It participates in phospholipid metabolism; phosphatidylethanolamine biosynthesis; phosphatidylethanolamine from CDP-diacylglycerol: step 2/2. Catalyzes the formation of phosphatidylethanolamine (PtdEtn) from phosphatidylserine (PtdSer). This chain is Phosphatidylserine decarboxylase proenzyme, found in Clostridium botulinum (strain 657 / Type Ba4).